Here is a 333-residue protein sequence, read N- to C-terminus: 4-hydroxy-2-oxovalerate aldolase (333 aa).

Residues 3 to 253 (ILINDSTLRD…NTGIDLYHFL (251 aa)) enclose the Pyruvate carboxyltransferase domain. 11–12 (RD) is a binding site for substrate. Aspartate 12 contributes to the Mn(2+) binding site. Histidine 15 acts as the Proton acceptor in catalysis. Serine 165 and histidine 192 together coordinate substrate. Residues histidine 192 and histidine 194 each contribute to the Mn(2+) site.

This sequence belongs to the 4-hydroxy-2-oxovalerate aldolase family. Interacts with MhpF.

The catalysed reaction is (S)-4-hydroxy-2-oxopentanoate = acetaldehyde + pyruvate. It participates in aromatic compound metabolism; 3-phenylpropanoate degradation. Functionally, catalyzes the retro-aldol cleavage of 4-hydroxy-2-oxopentanoate to pyruvate and acetaldehyde. Is involved in the meta-cleavage pathway for the degradation of aromatic compounds. This is 4-hydroxy-2-oxovalerate aldolase from Serratia proteamaculans (strain 568).